We begin with the raw amino-acid sequence, 189 residues long: High affinity copper uptake protein 1 (189 aa).

Residues 1-67 (MDHSAHMGMS…AGLVINTAGE (67 aa)) are Extracellular-facing. A Methionine segments (Mets) motif motif is present at residues 13 to 18 (MGMSDM). Residues 15 to 36 (MSDMNHSTTMPPSHHHPTSSGS) are disordered. Residues 20–36 (HSTTMPPSHHHPTSSGS) are compositionally biased toward low complexity. A helical transmembrane segment spans residues 68-88 (MAGAFVAVFLLAMFYEGLKIA). The Cytoplasmic segment spans residues 89 to 131 (REGLLRKSQVSIRYNSMPVPGPNGTILMETHKTVGQQMLSFPH). Thr113 carries the post-translational modification Phosphothreonine. A helical transmembrane segment spans residues 132–152 (LLQTVLHIIQVVISYFLMLIF). Topologically, residues 153–155 (MTY) are extracellular. A helical transmembrane segment spans residues 156 to 176 (NGYLCIAVAAGAGTGYFLFSW). Over 177-189 (KKAVVVDITEHCH) the chain is Cytoplasmic. Residue Cys188 is modified to Cysteine sulfenic acid (-SOH).

The protein belongs to the copper transporter (Ctr) (TC 1.A.56) family. SLC31A subfamily. As to quaternary structure, homotrimer; is stabilized by cisplatin via interactions between cisplatin and the methionine-rich clusters, and could be crucial for the copper(2+) reduction process and copper(1+) stabilization. Heterotrimer between SLC31A1, CCS and SOD1; this heterotrimer is copper(1+)-mediated and its maintenance is regulated through SOD1 activation. Interacts with KDR; this interaction is induced upon VEGFA stimulation leading to SLC31A1 and KDR subsequent co-internalization to early endosomes, thereby activating KDR downstream signaling in endothelial cells. Interacts (via C-terminal domain) with ATOX1 (via dimer form); this interaction improves ATOX1 stability and controls intracellular copper(1+) levels. Interacts with SLC31A2; this interaction stabilizes SLC31A2 and protects its from ubiquitination and degradation. Interacts (via C-terminal domain) with CCS; this interaction is copper(1+)-mediated. In terms of processing, proteolytic cleavage, leading to a truncated form, is facilitated by SLC31A2 and initiated preferentially by CTSL and to a minor extend by CTSB in endolysosomal compartments. A post-CTSL/cathepsin L processing occurs to yield to the fully truncated form. Sulfenylated at Cys-188 after stimulation with VEGFA, which induces SLC31A1-KDR disulfide bond formation and their co-internalization to early endosomes, driving to a sustained VEGFR2 signaling.

It localises to the cell membrane. It is found in the early endosome membrane. The protein resides in the recycling endosome membrane. Its subcellular location is the apical cell membrane. The protein localises to the late endosome membrane. It localises to the basolateral cell membrane. The catalysed reaction is Ag(+)(out) = Ag(+)(in). It catalyses the reaction Cu(+)(out) = Cu(+)(in). In terms of biological role, uniporter that mediates the transport of copper(1+) from the extracellular space to the cytoplasm, across the plasma membrane and delivers directly copper(1+) to specific chaperone such as ATOX1, via a copper(1+)- mediated transient interaction between the C-terminal domain and a copper(1+) chaperone, thus controlling intracellular copper(1+) levels. May function in copper(1+) import from the apical membrane thus may drive intestinal copper absorption. The copper(1+) transport mechanism is sodium-independent, saturable and of high-affinity. Also mediates the uptake of silver(1+). May function in the influx of the platinum-containing chemotherapeutic agents. The platinum-containing chemotherapeutic agents uptake is saturable. In vitro, mediates the transport of cadmium(2+) into cells. Also participates in the first step of copper(2+) acquisition by cells through a direct transfer of copper(2+) from copper(2+) carriers in blood, such as ALB to the N-terminal domain of SLC31A1, leading to copper(2+) reduction and probably followed by copper(1+) stabilization. In addition, functions as a redox sensor to promote angiogenesis in endothelial cells, in a copper(1+) transport independent manner, by transmitting the VEGF-induced ROS signal through a sulfenylation at Cys-189 leadin g to a subsequent disulfide bond formation between SLC31A1 and KDR. The SLC31A1-KDR complex is then co-internalized to early endosomes, driving a sustained VEGFR2 signaling. Functionally, mobilizes copper(1+) out of the endosomal compartment, making copper(1+) available for export out of the cells. The protein is High affinity copper uptake protein 1 of Sus scrofa (Pig).